A 471-amino-acid chain; its full sequence is Protein naked cuticle homolog 1 (471 aa).

Disordered stretches follow at residues 1 to 23 and 41 to 82; these read MGKL…GDSF and QRCP…DEDD. G2 is lipidated: N-myristoyl glycine. Basic and acidic residues predominate over residues 62–75; the sequence is GTRELVGDTSREAL. Positions 125–190 are interaction with DVL1, DVL2 and DVL3; the sequence is QCDVSVEEDS…LRVKLTVAPD (66 aa). In terms of domain architecture, EF-hand spans 131–166; that stretch reads EEDSRQEWTFTLYDFDNNGKVTREDITSLLHTIYEV. The Ca(2+) site is built by D144, D146, N148, K150, and D155. Disordered stretches follow at residues 273–314, 337–382, and 448–471; these read GPGS…QGVD, GTQD…SPSA, and QAVQ…FYQP. Over residues 453–471 the composition is skewed to basic residues; that stretch reads HEHHHHHEHHHHYHHFYQP.

It belongs to the NKD family. In terms of assembly, interacts with DVL1, DVL2, DVL3 and PPP2R3A. In terms of tissue distribution, highly expressed in lung. Also expressed in brain, heart, kidney, liver, skin, stomach and testis. Within the testis expression is found in the seminiferous epithelium and round and elongating spermatids.

It is found in the cell membrane. It localises to the cytoplasm. In terms of biological role, cell autonomous antagonist of the canonical Wnt signaling pathway. May activate a second Wnt signaling pathway that controls planar cell polarity. Required for spermatogenesis. The chain is Protein naked cuticle homolog 1 (Nkd1) from Mus musculus (Mouse).